The chain runs to 131 residues: Small ribosomal subunit protein uS8 (131 aa).

It belongs to the universal ribosomal protein uS8 family. Part of the 30S ribosomal subunit. Contacts proteins S5 and S12.

One of the primary rRNA binding proteins, it binds directly to 16S rRNA central domain where it helps coordinate assembly of the platform of the 30S subunit. The sequence is that of Small ribosomal subunit protein uS8 from Burkholderia mallei (strain NCTC 10247).